An 864-amino-acid chain; its full sequence is A-kinase anchor protein 3 (864 aa).

A Phosphoserine; by STK33 modification is found at Ser-12. The interval 125–138 (VSFYANRLTNLVIA) is PKA-RII subunit binding domain. 2 disordered regions span residues 190 to 235 (NISS…DKPG) and 251 to 281 (AGDA…DFSN). Over residues 204 to 218 (SGSSQAPGLRYTSTL) the composition is skewed to polar residues. Ser-206 is subject to Phosphoserine. Residues 219 to 235 (KIKESTKEGKCPDDKPG) show a composition bias toward basic and acidic residues. Position 405 is a phosphoserine (Ser-405). Phosphotyrosine is present on Tyr-406. Positions 619-638 (VHEQNTQEEEIHPCERPKTP) are disordered. The span at 627-638 (EEIHPCERPKTP) shows a compositional bias: basic and acidic residues.

The protein belongs to the AKAP110 family. Interacts with ROPN1 and ROPN1L. Interacts with QRICH2. Phosphorylated by STK33 during sperm flagella assembly. Phosphorylated on tyrosine.

It localises to the cytoplasmic vesicle. Its subcellular location is the secretory vesicle. It is found in the acrosome. The protein localises to the cell projection. The protein resides in the cilium. It localises to the flagellum. Its function is as follows. Structural component of sperm fibrous sheath. Required for the formation of the subcellular structure of the sperm flagellum, sperm motility and male fertility. This Mus musculus (Mouse) protein is A-kinase anchor protein 3.